Reading from the N-terminus, the 151-residue chain is ATP synthase subunit b' (151 aa).

Residues 18–38 (TLPLMALQVVLLTFILNALFF) form a helical membrane-spanning segment.

Belongs to the ATPase B chain family. In terms of assembly, F-type ATPases have 2 components, F(1) - the catalytic core - and F(0) - the membrane proton channel. F(1) has five subunits: alpha(3), beta(3), gamma(1), delta(1), epsilon(1). F(0) has four main subunits: a(1), b(1), b'(1) and c(10-14). The alpha and beta chains form an alternating ring which encloses part of the gamma chain. F(1) is attached to F(0) by a central stalk formed by the gamma and epsilon chains, while a peripheral stalk is formed by the delta, b and b' chains.

The protein localises to the cellular thylakoid membrane. In terms of biological role, f(1)F(0) ATP synthase produces ATP from ADP in the presence of a proton or sodium gradient. F-type ATPases consist of two structural domains, F(1) containing the extramembraneous catalytic core and F(0) containing the membrane proton channel, linked together by a central stalk and a peripheral stalk. During catalysis, ATP synthesis in the catalytic domain of F(1) is coupled via a rotary mechanism of the central stalk subunits to proton translocation. Its function is as follows. Component of the F(0) channel, it forms part of the peripheral stalk, linking F(1) to F(0). The b'-subunit is a diverged and duplicated form of b found in plants and photosynthetic bacteria. This chain is ATP synthase subunit b', found in Prochlorococcus marinus (strain MIT 9303).